Here is a 905-residue protein sequence, read N- to C-terminus: V-type proton ATPase 116 kDa subunit a 1 (905 aa).

At 1–424 (MGDYVTPGEE…DAYGIATYRE (424 aa)) the chain is on the cytoplasmic side. The chain crosses the membrane as a helical span at residues 425 to 443 (INPAPYTMISFPFLFAVMF). Residues 444–445 (GD) lie on the Lumenal side of the membrane. A helical transmembrane segment spans residues 446-462 (MGHGAIMLLAALFFILK). At 463-477 (EKQLEAARIKDEIFQ) the chain is on the cytoplasmic side. Residues 478 to 507 (TFFGGRYVIFLMGAFSIYTGFMYNDVFSKS) traverse the membrane as a helical segment. At 508-572 (INTFGSSWQN…EGNKLSFLNS (65 aa)) the chain is on the lumenal side. A helical membrane pass occupies residues 573–592 (MKMKMSVLFGIAQMTFGVLL). The Cytoplasmic portion of the chain corresponds to 593 to 610 (SYQNFIYFKSDLDIKYMF). A helical transmembrane segment spans residues 611–631 (IPQMIFLSSIFIYLCIQILSK). Residues 632-699 (WLFFGAVGGT…YPGQATIEII (68 aa)) lie on the Lumenal side of the membrane. A helical transmembrane segment spans residues 700–719 (LVVLALVQVPIMLFAKPYFL). At 720-788 (YRRDKQQSRY…DVMVYQAIHT (69 aa)) the chain is on the cytoplasmic side. Residues 789-813 (IEFVLGCVSHTASYLRLWALSLAHA) form a helical membrane-spanning segment. Residues 814 to 834 (QLSDVLWTMVFRNAFVLDGYT) lie on the Lumenal side of the membrane. The chain crosses the membrane as a helical span at residues 835-873 (GAIATYILFFIFGSLSVFILVLMEGLSAFLHALRLHWVE). At 874 to 905 (FQSKFYGGLGYEFAPFSFEKILAEEREAEENL) the chain is on the cytoplasmic side.

This sequence belongs to the V-ATPase 116 kDa subunit family. In terms of assembly, V-ATPase is a heteromultimeric enzyme made up of two complexes: the ATP-hydrolytic V1 complex and the proton translocation V0 complex. The V1 complex consists of three catalytic AB heterodimers that form a heterohexamer, three peripheral stalks each consisting of EG heterodimers, one central rotor including subunits D and F, and the regulatory subunits C and H. The proton translocation complex V0 consists of the proton transport subunit a, a ring of proteolipid subunits c9c'', rotary subunit d, subunits e and f, and the accessory subunits vah-19/Ac45 and vah-20/PRR. Interacts with V-type proton ATPase subunit C vha-11. In terms of tissue distribution, ubiquitous expression in embryos. Expressed in gonads, intestine, neurons in the head and motoneurons in the ventral cord of larvae and adults. Expressed in the vulvae and spermathecal uterine valves. Weakly expressed in the pharynx. Specifically expressed in the nervous system.

The protein localises to the membrane. Functionally, subunit of the V0 complex of vacuolar(H+)-ATPase (V-ATPase), a multisubunit enzyme composed of a peripheral complex (V1) that hydrolyzes ATP and a membrane integral complex (V0) that translocates protons. V-ATPase is responsible for acidifying and maintaining the pH of intracellular compartments and in some cell types, is targeted to the plasma membrane, where it is responsible for acidifying the extracellular environment. Required for assembly and activity of the vacuolar ATPase. Regulates the size of gut granules during embryonic development. In neurons, required for necrotic cell death by promoting intracellular acidification. Required for cell death induced by hypoxia. Required for acidification of synaptic vesicles and the release of neurotransmitters from adult neurons. This is V-type proton ATPase 116 kDa subunit a 1 from Caenorhabditis elegans.